The chain runs to 637 residues: ATP-dependent zinc metalloprotease FtsH (637 aa).

The Cytoplasmic segment spans residues 1–6; sequence MNNQGR. A helical transmembrane segment spans residues 7–27; sequence SILAWATLFIFVILLFNVFQS. The Periplasmic segment spans residues 28 to 103; the sequence is DSLLGGRNNI…VVPLETRMNT (76 aa). A helical transmembrane segment spans residues 104-124; sequence FLGFLISWFPMLLLIGVWVFF. The Cytoplasmic portion of the chain corresponds to 125–637; the sequence is MRQMHGGGKA…TKAKKENYAS (513 aa). 195-202 contributes to the ATP binding site; it reads GPPGTGKT. Residue H417 coordinates Zn(2+). E418 is an active-site residue. The Zn(2+) site is built by H421 and D495. Positions 603–637 are disordered; the sequence is ENKFPFNDSSTIKIDKEKSPEKTKTTKAKKENYAS. The span at 615-637 shows a compositional bias: basic and acidic residues; sequence KIDKEKSPEKTKTTKAKKENYAS.

This sequence in the central section; belongs to the AAA ATPase family. In the C-terminal section; belongs to the peptidase M41 family. Homohexamer. Zn(2+) serves as cofactor.

The protein localises to the cell inner membrane. In terms of biological role, acts as a processive, ATP-dependent zinc metallopeptidase for both cytoplasmic and membrane proteins. Plays a role in the quality control of integral membrane proteins. The protein is ATP-dependent zinc metalloprotease FtsH of Rickettsia conorii (strain ATCC VR-613 / Malish 7).